The chain runs to 507 residues: 2,3-bisphosphoglycerate-independent phosphoglycerate mutase (507 aa).

Mn(2+) is bound by residues D13 and S63. S63 (phosphoserine intermediate) is an active-site residue. Residues H124, 153 to 154 (RD), R183, R189, 254 to 257 (RADR), and K330 each bind substrate. D396, H400, D437, H438, and H456 together coordinate Mn(2+).

It belongs to the BPG-independent phosphoglycerate mutase family. As to quaternary structure, monomer. Mn(2+) serves as cofactor.

It catalyses the reaction (2R)-2-phosphoglycerate = (2R)-3-phosphoglycerate. It participates in carbohydrate degradation; glycolysis; pyruvate from D-glyceraldehyde 3-phosphate: step 3/5. Catalyzes the interconversion of 2-phosphoglycerate and 3-phosphoglycerate. This Paracoccus denitrificans (strain Pd 1222) protein is 2,3-bisphosphoglycerate-independent phosphoglycerate mutase.